Consider the following 115-residue polypeptide: Small nuclear ribonucleoprotein Sm D2 (115 aa).

The Sm domain maps to 30–115 (LSVLQQAVKN…VVLVVRIPSA (86 aa)).

It belongs to the snRNP core protein family. Belongs to the 40S cdc5-associated complex (or cwf complex), a spliceosome sub-complex reminiscent of a late-stage spliceosome composed of the U2, U5 and U6 snRNAs and at least brr2, cdc5, cwf2/prp3, cwf3/syf1, cwf4/syf3, cwf5/ecm2, spp42/cwf6, cwf7/spf27, cwf8, cwf9, cwf10, cwf11, cwf12, prp45/cwf13, cwf14, cwf15, cwf16, cwf17, cwf18, cwf19, cwf20, cwf21, cwf22, cwf23, cwf24, cwf25, cwf26, cyp7/cwf27, cwf28, cwf29/ist3, lea1, msl1, prp5/cwf1, prp10, prp12/sap130, prp17, prp22, sap61, sap62, sap114, sap145, slu7, smb1, smd1, smd3, smf1, smg1 and syf2.

The protein localises to the nucleus. The protein resides in the cytoplasm. It localises to the cytosol. Functionally, plays a role in pre-mRNA splicing as a core component of the spliceosomal U1, U2, U4 and U5 small nuclear ribonucleoproteins (snRNPs), the building blocks of the spliceosome. This is Small nuclear ribonucleoprotein Sm D2 (smd2) from Schizosaccharomyces pombe (strain 972 / ATCC 24843) (Fission yeast).